The chain runs to 458 residues: ATP-dependent protease ATPase subunit HslU (458 aa).

ATP contacts are provided by residues Val18, 60-65 (GVGKTE), Asp270, Glu335, and Arg407.

It belongs to the ClpX chaperone family. HslU subfamily. As to quaternary structure, a double ring-shaped homohexamer of HslV is capped on each side by a ring-shaped HslU homohexamer. The assembly of the HslU/HslV complex is dependent on binding of ATP.

The protein resides in the cytoplasm. Functionally, ATPase subunit of a proteasome-like degradation complex; this subunit has chaperone activity. The binding of ATP and its subsequent hydrolysis by HslU are essential for unfolding of protein substrates subsequently hydrolyzed by HslV. HslU recognizes the N-terminal part of its protein substrates and unfolds these before they are guided to HslV for hydrolysis. The chain is ATP-dependent protease ATPase subunit HslU from Desulfitobacterium hafniense (strain DSM 10664 / DCB-2).